The primary structure comprises 207 residues: Small ribosomal subunit protein uS4 (207 aa).

The tract at residues 31-55 (KCKLDSKPGQHGRTSGARTSDYGTQ) is disordered. The span at 42–53 (GRTSGARTSDYG) shows a compositional bias: polar residues. The 61-residue stretch at 97–157 (SRLDNVVYRM…EQKKKQARIL (61 aa)) folds into the S4 RNA-binding domain.

Belongs to the universal ribosomal protein uS4 family. As to quaternary structure, part of the 30S ribosomal subunit. Contacts protein S5. The interaction surface between S4 and S5 is involved in control of translational fidelity.

Functionally, one of the primary rRNA binding proteins, it binds directly to 16S rRNA where it nucleates assembly of the body of the 30S subunit. Its function is as follows. With S5 and S12 plays an important role in translational accuracy. In Paraburkholderia xenovorans (strain LB400), this protein is Small ribosomal subunit protein uS4.